The following is a 310-amino-acid chain: Probable GTP 3',8-cyclase (310 aa).

The region spanning 5 to 218 (KYGRSLQKLR…VNIIFELGGR (214 aa)) is the Radical SAM core domain. A GTP-binding site is contributed by R14. Residues C21, C25, and C28 each coordinate [4Fe-4S] cluster. Residue K62 participates in GTP binding. S-adenosyl-L-methionine is bound at residue G66. T91 lines the GTP pocket. S115 contributes to the S-adenosyl-L-methionine binding site. K153 lines the GTP pocket. [4Fe-4S] cluster is bound by residues C251, C254, and C268.

This sequence belongs to the radical SAM superfamily. MoaA family. [4Fe-4S] cluster serves as cofactor.

The catalysed reaction is GTP + AH2 + S-adenosyl-L-methionine = (8S)-3',8-cyclo-7,8-dihydroguanosine 5'-triphosphate + 5'-deoxyadenosine + L-methionine + A + H(+). Its pathway is cofactor biosynthesis; molybdopterin biosynthesis. Functionally, catalyzes the cyclization of GTP to (8S)-3',8-cyclo-7,8-dihydroguanosine 5'-triphosphate. In Pyrobaculum aerophilum (strain ATCC 51768 / DSM 7523 / JCM 9630 / CIP 104966 / NBRC 100827 / IM2), this protein is Probable GTP 3',8-cyclase.